Reading from the N-terminus, the 66-residue chain is Alpha-conotoxin RegIIA (66 aa).

An N-terminal signal peptide occupies residues 1–21; the sequence is MGMRMMFTVFLLVVLTTTVVS. Residues 22-49 constitute a propeptide that is removed on maturation; the sequence is STSVRASDGRNAAADNRASDLIAQIVRR. Cystine bridges form between C51–C57 and C52–C65. The interval 53-55 is ser-Xaa-Pro motif, crucial for potent interaction with nAChR; the sequence is SHP. C65 carries the post-translational modification Cysteine amide.

Belongs to the conotoxin A superfamily. Expressed by the venom duct.

It localises to the secreted. Its function is as follows. Alpha-conotoxins act on postsynaptic membranes, they bind to the nicotinic acetylcholine receptors (nAChR) and thus inhibit them. This toxin potently inhibits alpha-3 containing subunit nAChR. It inhibits alpha-3-beta-2/CHRNA3-CHRNB2 (IC(50)=10.7-33 nM (rat)/132.4-704.1 nM (human)) and alpha-3-beta-4/CHRNA3-CHRNB4 (IC(50)=47.3-97 nM (rat)/52.1 nM (human)). It also inhibits alpha-7/CHRNA7 nAChR with IC(50)=103-210 nM (human)/41-61.2 nM (rat) nAChRs. It is more potent on alpha-3-beta-2 receptors in human than in rat, due to a variation (Pro vs Gln) in alpha-3 subunit in these orthologs. Conversely, does not show species-specific differences in sensitivity at the alpha-3-beta-4 receptor. This is Alpha-conotoxin RegIIA from Conus regius (Crown cone).